A 255-amino-acid chain; its full sequence is Indole-3-glycerol phosphate synthase (255 aa).

It belongs to the TrpC family.

The catalysed reaction is 1-(2-carboxyphenylamino)-1-deoxy-D-ribulose 5-phosphate + H(+) = (1S,2R)-1-C-(indol-3-yl)glycerol 3-phosphate + CO2 + H2O. It participates in amino-acid biosynthesis; L-tryptophan biosynthesis; L-tryptophan from chorismate: step 4/5. The chain is Indole-3-glycerol phosphate synthase from Streptococcus gordonii (strain Challis / ATCC 35105 / BCRC 15272 / CH1 / DL1 / V288).